The following is a 576-amino-acid chain: Phosphoenolpyruvate-protein phosphotransferase (576 aa).

Histidine 189 (tele-phosphohistidine intermediate) is an active-site residue. Arginine 296 and arginine 332 together coordinate phosphoenolpyruvate. Residues glutamate 431 and aspartate 455 each coordinate Mg(2+). Phosphoenolpyruvate is bound by residues asparagine 454–aspartate 455 and arginine 465. Cysteine 502 acts as the Proton donor in catalysis.

Belongs to the PEP-utilizing enzyme family. In terms of assembly, homodimer. It depends on Mg(2+) as a cofactor.

It is found in the cytoplasm. The catalysed reaction is L-histidyl-[protein] + phosphoenolpyruvate = N(pros)-phospho-L-histidyl-[protein] + pyruvate. Functionally, general (non sugar-specific) component of the phosphoenolpyruvate-dependent sugar phosphotransferase system (sugar PTS). This major carbohydrate active-transport system catalyzes the phosphorylation of incoming sugar substrates concomitantly with their translocation across the cell membrane. Enzyme I transfers the phosphoryl group from phosphoenolpyruvate (PEP) to the phosphoryl carrier protein (HPr). This chain is Phosphoenolpyruvate-protein phosphotransferase (ptsI), found in Buchnera aphidicola subsp. Baizongia pistaciae (strain Bp).